The sequence spans 248 residues: UPF0246 protein MYPE6270 (248 aa).

Belongs to the UPF0246 family.

This is UPF0246 protein MYPE6270 from Malacoplasma penetrans (strain HF-2) (Mycoplasma penetrans).